Here is a 229-residue protein sequence, read N- to C-terminus: Cytidylate kinase (229 aa).

12–20 contacts ATP; that stretch reads GPSGSGKGT.

The protein belongs to the cytidylate kinase family. Type 1 subfamily.

It localises to the cytoplasm. The enzyme catalyses CMP + ATP = CDP + ADP. It catalyses the reaction dCMP + ATP = dCDP + ADP. In Pseudomonas fluorescens (strain Pf0-1), this protein is Cytidylate kinase.